Here is a 395-residue protein sequence, read N- to C-terminus: Accessory Sec system protein translocase subunit SecY2 (395 aa).

10 consecutive transmembrane segments (helical) span residues 13 to 33, 63 to 83, 102 to 122, 128 to 148, 157 to 177, 190 to 210, 239 to 259, 272 to 292, 326 to 346, and 355 to 375; these read VSFS…PLPF, ISIF…IQLL, LMQF…VFAF, GLED…VVWL, VGAS…PNII, WIWL…WLAF, MAAM…LMVG, VFQA…FTFV, LIWI…VFGL, and YAGF…MGGI.

This sequence belongs to the SecY/SEC61-alpha family. SecY2 subfamily. As to quaternary structure, component of the accessory SecA2/SecY2 protein translocase complex required to export cell wall proteins. May form heterotrimers with SecE and SecG subunits.

It is found in the cell membrane. In terms of biological role, part of the accessory SecA2/SecY2 system specifically required for export of possible cell wall proteins. The central subunit of a protein translocation channel. This Lactobacillus johnsonii (strain CNCM I-12250 / La1 / NCC 533) protein is Accessory Sec system protein translocase subunit SecY2.